The sequence spans 172 residues: Inorganic pyrophosphatase (172 aa).

Substrate-binding residues include K28, R42, and Y54. Residues D64, D69, and D101 each contribute to the Mg(2+) site. Residue Y140 coordinates substrate.

It belongs to the PPase family. In terms of assembly, homohexamer. It depends on Mg(2+) as a cofactor.

It is found in the cytoplasm. The enzyme catalyses diphosphate + H2O = 2 phosphate + H(+). Its function is as follows. Catalyzes the hydrolysis of inorganic pyrophosphate (PPi) forming two phosphate ions. The protein is Inorganic pyrophosphatase of Campylobacter jejuni subsp. jejuni serotype O:2 (strain ATCC 700819 / NCTC 11168).